Reading from the N-terminus, the 60-residue chain is Large ribosomal subunit protein bL32 (60 aa).

The tract at residues 1–60 (MAVQQNKKSPSKRGMHRSHNALTVPGIAVEPTTGETHMRHHISPNGFYRGRQVLKNKSEA) is disordered. A compositionally biased stretch (basic residues) spans 9-19 (SPSKRGMHRSH).

This sequence belongs to the bacterial ribosomal protein bL32 family.

In Acidovorax ebreus (strain TPSY) (Diaphorobacter sp. (strain TPSY)), this protein is Large ribosomal subunit protein bL32.